Reading from the N-terminus, the 132-residue chain is Small ribosomal subunit protein uS8 (132 aa).

Belongs to the universal ribosomal protein uS8 family. As to quaternary structure, part of the 30S ribosomal subunit. Contacts proteins S5 and S12.

Its function is as follows. One of the primary rRNA binding proteins, it binds directly to 16S rRNA central domain where it helps coordinate assembly of the platform of the 30S subunit. In Mycoplasmopsis pulmonis (strain UAB CTIP) (Mycoplasma pulmonis), this protein is Small ribosomal subunit protein uS8.